The chain runs to 248 residues: Secreted and transmembrane protein 1 (248 aa).

The signal sequence occupies residues 1–28; the sequence is MQTCPLAFPGHVSQALGTLLFLAASLSA. The Extracellular portion of the chain corresponds to 29-145; it reads QNEGWDSPIC…AEPQSAPDTG (117 aa). Cysteines 38 and 55 form a disulfide. Residue N56 is glycosylated (N-linked (GlcNAc...) asparagine). A helical transmembrane segment spans residues 146–166; the sequence is FWPVPAVVTAVFILLVALVMF. Over 167–248 the chain is Cytoplasmic; the sequence is AWYRCRCSQQ…QPLFPYAADP (82 aa).

It belongs to the SECTM family. Interacts with CD7. Detected at the highest levels in peripheral blood leukocytes and breast cancer cell lines. Found in leukocytes of the myeloid lineage, with the strongest expression observed in granulocytes and no detectable expression in lymphocytes. Expressed in thymic epithelial cells and fibroblasts.

The protein resides in the cell membrane. The protein localises to the secreted. Its function is as follows. May be involved in thymocyte signaling. The sequence is that of Secreted and transmembrane protein 1 (SECTM1) from Homo sapiens (Human).